Consider the following 264-residue polypeptide: MKPTTIASLQKCKQNKKRFATITAYDYSFAKLFAEEGLNVMLVGDSLGMTVQGHDSTLPVTVQDIAYHTAAVRRGAPNCLLLADLPFMAYSTPEQAFENAATVMRAGANMVKIEGGAWLVETVRMLTERAVPVCGHLGLTPQSVNIFGGYKVQGRGDEAGDQLLSDALALEAAGAQLLVLECVPVELAKRITEALAIPVIGIGAGNVTDGQILVMHDAFGITGGHIPKFAKNFLAETGDIRAAVRQYIAEVESGVYPGEEHSFH.

2 residues coordinate Mg(2+): Asp45 and Asp84. 3-methyl-2-oxobutanoate contacts are provided by residues Asp45–Ser46, Asp84, and Lys112. A Mg(2+)-binding site is contributed by Glu114. Glu181 serves as the catalytic Proton acceptor.

It belongs to the PanB family. In terms of assembly, homodecamer; pentamer of dimers. Mg(2+) serves as cofactor.

The protein resides in the cytoplasm. The enzyme catalyses 3-methyl-2-oxobutanoate + (6R)-5,10-methylene-5,6,7,8-tetrahydrofolate + H2O = 2-dehydropantoate + (6S)-5,6,7,8-tetrahydrofolate. It functions in the pathway cofactor biosynthesis; (R)-pantothenate biosynthesis; (R)-pantoate from 3-methyl-2-oxobutanoate: step 1/2. Catalyzes the reversible reaction in which hydroxymethyl group from 5,10-methylenetetrahydrofolate is transferred onto alpha-ketoisovalerate to form ketopantoate. The chain is 3-methyl-2-oxobutanoate hydroxymethyltransferase from Escherichia fergusonii (strain ATCC 35469 / DSM 13698 / CCUG 18766 / IAM 14443 / JCM 21226 / LMG 7866 / NBRC 102419 / NCTC 12128 / CDC 0568-73).